A 98-amino-acid polypeptide reads, in one-letter code: Large ribosomal subunit protein eL21 (98 aa).

The span at 1–24 (MVKKAHSFRRKTRGKLSKHPRRRG) shows a compositional bias: basic residues. The interval 1–27 (MVKKAHSFRRKTRGKLSKHPRRRGLPP) is disordered.

Belongs to the eukaryotic ribosomal protein eL21 family.

This is Large ribosomal subunit protein eL21 from Thermococcus gammatolerans (strain DSM 15229 / JCM 11827 / EJ3).